The primary structure comprises 335 residues: Capsular polysaccharide phosphotransferase WcwK (335 aa).

The protein belongs to the stealth family.

The chain is Capsular polysaccharide phosphotransferase WcwK (wcwK) from Streptococcus pneumoniae.